The following is a 292-amino-acid chain: Nitrogenase iron protein (292 aa).

10–17 (GKGGIGKS) lines the ATP pocket. Cysteine 98 is a binding site for [4Fe-4S] cluster. Residue arginine 101 is modified to ADP-ribosylarginine; by dinitrogenase reductase ADP-ribosyltransferase. Cysteine 133 provides a ligand contact to [4Fe-4S] cluster.

The protein belongs to the NifH/BchL/ChlL family. In terms of assembly, homodimer. Requires [4Fe-4S] cluster as cofactor. In terms of processing, the reversible ADP-ribosylation of Arg-101 inactivates the nitrogenase reductase and regulates nitrogenase activity.

The catalysed reaction is N2 + 8 reduced [2Fe-2S]-[ferredoxin] + 16 ATP + 16 H2O = H2 + 8 oxidized [2Fe-2S]-[ferredoxin] + 2 NH4(+) + 16 ADP + 16 phosphate + 6 H(+). Functionally, the key enzymatic reactions in nitrogen fixation are catalyzed by the nitrogenase complex, which has 2 components: the iron protein and the molybdenum-iron protein. The protein is Nitrogenase iron protein of Teredinibacter turnerae (strain ATCC 39867 / T7901).